The chain runs to 483 residues: NADH-quinone oxidoreductase subunit N (483 aa).

13 helical membrane passes run 7-27 (AILTPEIVLSLFAMAGLLGAV), 33-53 (ALASAMCWGTAALFIIMAFYI), 76-96 (FAKITILLSAAAILMISQDYM), 108-128 (VLIILAVVGMMIMVSAGDLIA), 161-181 (FVLGALSSGLLLYGSSLAYGF), 196-216 (GGDMPLGLLFGLVFITAGLAF), 235-255 (PTPITALFATAPKVAAMALFA), 272-292 (IVAFLAVVSMFLGAIAAIGQT), 297-317 (LMAYSSISHMGFALMGLSAGT), 323-343 (AMLIYMAIYVAMNIGTFAFIL), 369-389 (ALAILVMMFSLAGVPPLLGFF), 402-422 (GLVWLAIAGVIASVIGAFYYI), and 442-462 (MGLVPYVGLIAMALVIGLGWV).

Belongs to the complex I subunit 2 family. As to quaternary structure, NDH-1 is composed of 14 different subunits. Subunits NuoA, H, J, K, L, M, N constitute the membrane sector of the complex.

The protein localises to the cell inner membrane. The enzyme catalyses a quinone + NADH + 5 H(+)(in) = a quinol + NAD(+) + 4 H(+)(out). Its function is as follows. NDH-1 shuttles electrons from NADH, via FMN and iron-sulfur (Fe-S) centers, to quinones in the respiratory chain. The immediate electron acceptor for the enzyme in this species is believed to be ubiquinone. Couples the redox reaction to proton translocation (for every two electrons transferred, four hydrogen ions are translocated across the cytoplasmic membrane), and thus conserves the redox energy in a proton gradient. The chain is NADH-quinone oxidoreductase subunit N from Jannaschia sp. (strain CCS1).